We begin with the raw amino-acid sequence, 286 residues long: Putative 2-aminoethylphosphonate transport system permease protein PhnU (286 aa).

The next 6 helical transmembrane spans lie at 19 to 39 (WLLLPLLVLATLFFWPLSLIV), 76 to 96 (FFATAGCLLLGSVMSLILVFI), 111 to 131 (FIALPTFLITLAFTFIYGSAG), 150 to 170 (FLYSMQGVILAEITVFTPLVM), 202 to 222 (VIFPAALPALMAGGSLCLLLT), and 254 to 274 (YTVACMIALINIVLSLGLFSL). One can recognise an ABC transmembrane type-1 domain in the interval 68-275 (LLNTLQIAFF…VLSLGLFSLY (208 aa)).

Belongs to the binding-protein-dependent transport system permease family.

The protein localises to the cell inner membrane. Probably part of the PhnSTUV complex (TC 3.A.1.11.5) involved in 2-aminoethylphosphonate import. Probably responsible for the translocation of the substrate across the membrane. The polypeptide is Putative 2-aminoethylphosphonate transport system permease protein PhnU (phnU) (Salmonella typhimurium (strain LT2 / SGSC1412 / ATCC 700720)).